The primary structure comprises 214 residues: Large ribosomal subunit protein uL1 (214 aa).

This sequence belongs to the universal ribosomal protein uL1 family. Part of the 50S ribosomal subunit.

Functionally, binds directly to 23S rRNA. Probably involved in E site tRNA release. Protein L1 is also a translational repressor protein, it controls the translation of its operon by binding to its mRNA. The protein is Large ribosomal subunit protein uL1 of Methanopyrus kandleri (strain AV19 / DSM 6324 / JCM 9639 / NBRC 100938).